A 657-amino-acid chain; its full sequence is Probable potassium transport system protein Kup 1 (657 aa).

Helical transmembrane passes span 40-60 (VTSGFWALTLGSIGVVFGDIG), 88-108 (VLSLILWALLIVVTAKYVLLL), 135-155 (WFLLALGVVGASMFIGDSMIT), 172-192 (PALEHYVVPLTVLILVLLFAV), 198-218 (ALVASAFGPVMVVWFTCIAVM), 241-261 (FLLSHGTIGLVTLGAVFLAVT), 282-302 (WMFFVLPSLLINYFGQGALVL), 320-340 (LVLPLVGLATAATVIASQAVI), 380-400 (LLLIGVMLLVLLFHTPSNLAS), 402-422 (YGIAVSTTMVADGIMGFVVIW), 432-452 (AAAVILPFVVVDMSFFSANLL), and 454-474 (LLEGAWVPLLFGAAMAGTIWT).

Belongs to the HAK/KUP transporter (TC 2.A.72) family.

The protein resides in the cell inner membrane. It carries out the reaction K(+)(in) + H(+)(in) = K(+)(out) + H(+)(out). Functionally, transport of potassium into the cell. Likely operates as a K(+):H(+) symporter. This is Probable potassium transport system protein Kup 1 from Bradyrhizobium diazoefficiens (strain JCM 10833 / BCRC 13528 / IAM 13628 / NBRC 14792 / USDA 110).